A 178-amino-acid chain; its full sequence is CDP-archaeol synthase (178 aa).

The next 4 helical transmembrane spans lie at 3–23 (LLLLLFSAIWYILPAYIANAV), 56–76 (FFGILFGIITGILQHFIVILY), 91–111 (IILSFLLATGALFGDMLGSFI), and 136–156 (LLFAYPFYPLPINTIILLLVI).

The protein belongs to the CDP-archaeol synthase family. The cofactor is Mg(2+).

It is found in the cell membrane. The enzyme catalyses 2,3-bis-O-(geranylgeranyl)-sn-glycerol 1-phosphate + CTP + H(+) = CDP-2,3-bis-O-(geranylgeranyl)-sn-glycerol + diphosphate. It participates in membrane lipid metabolism; glycerophospholipid metabolism. In terms of biological role, catalyzes the formation of CDP-2,3-bis-(O-geranylgeranyl)-sn-glycerol (CDP-archaeol) from 2,3-bis-(O-geranylgeranyl)-sn-glycerol 1-phosphate (DGGGP) and CTP. This reaction is the third ether-bond-formation step in the biosynthesis of archaeal membrane lipids. In Methanococcus maripaludis (strain C5 / ATCC BAA-1333), this protein is CDP-archaeol synthase.